Here is a 347-residue protein sequence, read N- to C-terminus: 4-hydroxy-2-oxovalerate aldolase 1 (347 aa).

The Pyruvate carboxyltransferase domain maps to 13–265; sequence IRVTDTSLRD…KTGIDFFAIA (253 aa). A substrate-binding site is contributed by 21 to 22; the sequence is RD. Position 22 (Asp-22) interacts with Mn(2+). Catalysis depends on His-25, which acts as the Proton acceptor. Substrate-binding residues include Ser-175 and His-204. Mn(2+)-binding residues include His-204 and His-206. Tyr-295 provides a ligand contact to substrate.

This sequence belongs to the 4-hydroxy-2-oxovalerate aldolase family.

It catalyses the reaction (S)-4-hydroxy-2-oxopentanoate = acetaldehyde + pyruvate. This chain is 4-hydroxy-2-oxovalerate aldolase 1, found in Rhodococcus erythropolis (strain PR4 / NBRC 100887).